The chain runs to 523 residues: UDP-glucuronosyltransferase 3A1 (523 aa).

A signal peptide spans 1–22; it reads MAAHRSWLLVSFFLLEVLLLEA. Residues 23–487 are Extracellular-facing; sequence AKILTISTLS…QPWHEQYMLD (465 aa). Asparagine 70 is a glycosylation site (N-linked (GlcNAc...) asparagine). Residues 488-508 traverse the membrane as a helical segment; sequence VFLFLLGLTLGTLWLSVKVLV. The Cytoplasmic portion of the chain corresponds to 509–523; that stretch reads AVTRYLSISRKVKQA.

It belongs to the UDP-glycosyltransferase family. In terms of tissue distribution, highly expressed in kidney, while it is expressed at low levels in liver. Not detected in other tissues examined.

It localises to the membrane. The catalysed reaction is glucuronate acceptor + UDP-alpha-D-glucuronate = acceptor beta-D-glucuronoside + UDP + H(+). In terms of biological role, UDP-glucuronosyltransferases catalyze phase II biotransformation reactions in which lipophilic substrates are conjugated with glucuronic acid to increase water solubility and enhance excretion. They are of major importance in the conjugation and subsequent elimination of potentially toxic xenobiotics and endogenous compounds. This is UDP-glucuronosyltransferase 3A1 (Ugt3a1) from Mus musculus (Mouse).